We begin with the raw amino-acid sequence, 419 residues long: Peptide chain release factor subunit 1 (419 aa).

This sequence belongs to the eukaryotic release factor 1 family. Heterodimer of two subunits, one of which binds GTP.

It localises to the cytoplasm. In terms of biological role, directs the termination of nascent peptide synthesis (translation) in response to the termination codons UAA, UAG and UGA. In Methanococcus maripaludis (strain C6 / ATCC BAA-1332), this protein is Peptide chain release factor subunit 1.